The sequence spans 401 residues: Bifunctional enzyme IspD/IspF (401 aa).

Residues 1–234 (MQKPPRTAAI…SRLTAALGDI (234 aa)) are 2-C-methyl-D-erythritol 4-phosphate cytidylyltransferase. Positions 235 to 401 (RTGTGYDVHA…SPWGAEGQAS (167 aa)) are 2-C-methyl-D-erythritol 2,4-cyclodiphosphate synthase. Residues Asp241 and His243 each coordinate a divalent metal cation. Residues 241-243 (DVH) and 267-268 (HS) each bind 4-CDP-2-C-methyl-D-erythritol 2-phosphate. His275 provides a ligand contact to a divalent metal cation. Residues 289–291 (DIG), 365–368 (TTSE), Phe372, and Arg375 each bind 4-CDP-2-C-methyl-D-erythritol 2-phosphate.

In the N-terminal section; belongs to the IspD/TarI cytidylyltransferase family. IspD subfamily. The protein in the C-terminal section; belongs to the IspF family. A divalent metal cation is required as a cofactor.

It catalyses the reaction 2-C-methyl-D-erythritol 4-phosphate + CTP + H(+) = 4-CDP-2-C-methyl-D-erythritol + diphosphate. The catalysed reaction is 4-CDP-2-C-methyl-D-erythritol 2-phosphate = 2-C-methyl-D-erythritol 2,4-cyclic diphosphate + CMP. It functions in the pathway isoprenoid biosynthesis; isopentenyl diphosphate biosynthesis via DXP pathway; isopentenyl diphosphate from 1-deoxy-D-xylulose 5-phosphate: step 2/6. The protein operates within isoprenoid biosynthesis; isopentenyl diphosphate biosynthesis via DXP pathway; isopentenyl diphosphate from 1-deoxy-D-xylulose 5-phosphate: step 4/6. In terms of biological role, bifunctional enzyme that catalyzes the formation of 4-diphosphocytidyl-2-C-methyl-D-erythritol from CTP and 2-C-methyl-D-erythritol 4-phosphate (MEP) (IspD), and catalyzes the conversion of 4-diphosphocytidyl-2-C-methyl-D-erythritol 2-phosphate (CDP-ME2P) to 2-C-methyl-D-erythritol 2,4-cyclodiphosphate (ME-CPP) with a corresponding release of cytidine 5-monophosphate (CMP) (IspF). The chain is Bifunctional enzyme IspD/IspF from Rhodopseudomonas palustris (strain HaA2).